The chain runs to 278 residues: Putative phosphoenolpyruvate synthase regulatory protein (278 aa).

An ADP-binding site is contributed by 158 to 165; the sequence is GVSRSGKT.

Belongs to the pyruvate, phosphate/water dikinase regulatory protein family. PSRP subfamily.

It carries out the reaction [pyruvate, water dikinase] + ADP = [pyruvate, water dikinase]-phosphate + AMP + H(+). It catalyses the reaction [pyruvate, water dikinase]-phosphate + phosphate + H(+) = [pyruvate, water dikinase] + diphosphate. In terms of biological role, bifunctional serine/threonine kinase and phosphorylase involved in the regulation of the phosphoenolpyruvate synthase (PEPS) by catalyzing its phosphorylation/dephosphorylation. The polypeptide is Putative phosphoenolpyruvate synthase regulatory protein (Acinetobacter baumannii (strain AYE)).